The primary structure comprises 226 residues: Endonuclease NucS (226 aa).

Belongs to the NucS endonuclease family.

The protein resides in the cytoplasm. Its function is as follows. Cleaves both 3' and 5' ssDNA extremities of branched DNA structures. The chain is Endonuclease NucS from Mycobacterium tuberculosis (strain ATCC 25618 / H37Rv).